The sequence spans 479 residues: Cysteine protease effector 1 (479 aa).

The polypeptide is Cysteine protease effector 1 (Escherichia coli O1:K1:H7 (strain ATCC 11775 / DSM 30083 / JCM 1649 / NBRC 102203 / NCTC 9001 / U5/41)).